Reading from the N-terminus, the 117-residue chain is Large ribosomal subunit protein bL20 (117 aa).

The protein belongs to the bacterial ribosomal protein bL20 family.

In terms of biological role, binds directly to 23S ribosomal RNA and is necessary for the in vitro assembly process of the 50S ribosomal subunit. It is not involved in the protein synthesizing functions of that subunit. The polypeptide is Large ribosomal subunit protein bL20 (Roseiflexus castenholzii (strain DSM 13941 / HLO8)).